The following is a 275-amino-acid chain: Formamidopyrimidine-DNA glycosylase (275 aa).

The Schiff-base intermediate with DNA role is filled by Pro2. Glu3 functions as the Proton donor in the catalytic mechanism. The active-site Proton donor; for beta-elimination activity is the Lys58. Positions 93, 111, and 156 each coordinate DNA. The FPG-type zinc finger occupies 241–275; it reads FVYDRAGEPCRVCGTPIRQIVQGQRSTYFCPTCQR. Catalysis depends on Arg265, which acts as the Proton donor; for delta-elimination activity.

This sequence belongs to the FPG family. As to quaternary structure, monomer. Requires Zn(2+) as cofactor.

It catalyses the reaction Hydrolysis of DNA containing ring-opened 7-methylguanine residues, releasing 2,6-diamino-4-hydroxy-5-(N-methyl)formamidopyrimidine.. The catalysed reaction is 2'-deoxyribonucleotide-(2'-deoxyribose 5'-phosphate)-2'-deoxyribonucleotide-DNA = a 3'-end 2'-deoxyribonucleotide-(2,3-dehydro-2,3-deoxyribose 5'-phosphate)-DNA + a 5'-end 5'-phospho-2'-deoxyribonucleoside-DNA + H(+). Involved in base excision repair of DNA damaged by oxidation or by mutagenic agents. Acts as a DNA glycosylase that recognizes and removes damaged bases. Has a preference for oxidized purines, such as 7,8-dihydro-8-oxoguanine (8-oxoG). Has AP (apurinic/apyrimidinic) lyase activity and introduces nicks in the DNA strand. Cleaves the DNA backbone by beta-delta elimination to generate a single-strand break at the site of the removed base with both 3'- and 5'-phosphates. In Burkholderia multivorans (strain ATCC 17616 / 249), this protein is Formamidopyrimidine-DNA glycosylase.